The chain runs to 141 residues: Large ribosomal subunit protein uL11 (141 aa).

It belongs to the universal ribosomal protein uL11 family. Part of the ribosomal stalk of the 50S ribosomal subunit. Interacts with L10 and the large rRNA to form the base of the stalk. L10 forms an elongated spine to which L12 dimers bind in a sequential fashion forming a multimeric L10(L12)X complex. Post-translationally, one or more lysine residues are methylated.

Forms part of the ribosomal stalk which helps the ribosome interact with GTP-bound translation factors. The chain is Large ribosomal subunit protein uL11 from Lactococcus lactis subsp. lactis (strain IL1403) (Streptococcus lactis).